Reading from the N-terminus, the 430-residue chain is Glutamate-1-semialdehyde 2,1-aminomutase (430 aa).

N6-(pyridoxal phosphate)lysine is present on K269.

It belongs to the class-III pyridoxal-phosphate-dependent aminotransferase family. HemL subfamily. As to quaternary structure, homodimer. Pyridoxal 5'-phosphate serves as cofactor.

The protein resides in the cytoplasm. It carries out the reaction (S)-4-amino-5-oxopentanoate = 5-aminolevulinate. It participates in porphyrin-containing compound metabolism; protoporphyrin-IX biosynthesis; 5-aminolevulinate from L-glutamyl-tRNA(Glu): step 2/2. The chain is Glutamate-1-semialdehyde 2,1-aminomutase from Desulfitobacterium hafniense (strain Y51).